A 515-amino-acid polypeptide reads, in one-letter code: Maturase K (515 aa).

It belongs to the intron maturase 2 family. MatK subfamily.

The protein resides in the plastid. It localises to the chloroplast. In terms of biological role, usually encoded in the trnK tRNA gene intron. Probably assists in splicing its own and other chloroplast group II introns. The protein is Maturase K of Sorghum bicolor (Sorghum).